The following is a 298-amino-acid chain: N-acetylmuramic acid 6-phosphate etherase (298 aa).

One can recognise an SIS domain in the interval 55 to 218; that stretch reads IHTQVSGGGR…STGLMIKSGK (164 aa). Glutamate 83 acts as the Proton donor in catalysis. Residue glutamate 114 is part of the active site.

This sequence belongs to the GCKR-like family. MurNAc-6-P etherase subfamily. In terms of assembly, homodimer.

The catalysed reaction is N-acetyl-D-muramate 6-phosphate + H2O = N-acetyl-D-glucosamine 6-phosphate + (R)-lactate. The protein operates within amino-sugar metabolism; 1,6-anhydro-N-acetylmuramate degradation. It participates in amino-sugar metabolism; N-acetylmuramate degradation. Its pathway is cell wall biogenesis; peptidoglycan recycling. Functionally, specifically catalyzes the cleavage of the D-lactyl ether substituent of MurNAc 6-phosphate, producing GlcNAc 6-phosphate and D-lactate. Together with AnmK, is also required for the utilization of anhydro-N-acetylmuramic acid (anhMurNAc) either imported from the medium or derived from its own cell wall murein, and thus plays a role in cell wall recycling. The chain is N-acetylmuramic acid 6-phosphate etherase from Escherichia coli O1:K1 / APEC.